Consider the following 509-residue polypeptide: MDLEAKLHEIRKPIMVLGTSSGAGKSLTVTAICRILKNLGEEPIPFKGQNMSNNAWIDWEGGEMAYSQALQAFACGINPSAEMNPILLKPQGNSTSEVIHLGKSIGTTTAQNYYKDWFIPGWEVIKKSLKSIYELNPNCRLIIEGAGSPVEMNLIHRDLTNLRVAKYLNANCLLVTDIERGGVFAQIIGTLELMKPEERKLIKGIIINRFRGDLSLFEDGKKWIENKTQIPVIGIIPWLNDSFPPEDSLDLIEKKSLSKNHEIKVGIIKLPSISNFSDFDPLENEETILIEWIRKSKNLSTYDFIILPGSKQTIKDQKFLENSGLSQDIRDYSNNEGNIIGICGGLQMLGTTLEDPYFKEGAKNYSEQKINGIGLLPLKTTFFKKKLTRQINTKSIWPCQSQINGFEIHNGQTILDDSQSSLKINPIFEDLDLGWFKENNKGGTIAGTYIHGIFENDSWREQYINLIRKSKNLPILNKKSISYKKKRESIIDNLANEFHKHLNLTSFLS.

One can recognise a GATase cobBQ-type domain in the interval 262–459 (EIKVGIIKLP…IHGIFENDSW (198 aa)). The active-site Nucleophile is Cys343. Residue His451 is part of the active site.

Belongs to the CobB/CobQ family. CobQ subfamily.

It participates in cofactor biosynthesis; adenosylcobalamin biosynthesis. Catalyzes amidations at positions B, D, E, and G on adenosylcobyrinic A,C-diamide. NH(2) groups are provided by glutamine, and one molecule of ATP is hydrogenolyzed for each amidation. This Prochlorococcus marinus (strain MIT 9215) protein is Cobyric acid synthase.